Consider the following 337-residue polypeptide: Glyceraldehyde-3-phosphate dehydrogenase (337 aa).

NAD(+)-binding positions include 12–13 (RI), D34, and K79. Residues 150–152 (SCT), T181, 210–211 (TG), and R233 contribute to the D-glyceraldehyde 3-phosphate site. C151 (nucleophile) is an active-site residue. N315 serves as a coordination point for NAD(+).

This sequence belongs to the glyceraldehyde-3-phosphate dehydrogenase family. As to quaternary structure, homotetramer.

Its subcellular location is the cytoplasm. The enzyme catalyses D-glyceraldehyde 3-phosphate + phosphate + NAD(+) = (2R)-3-phospho-glyceroyl phosphate + NADH + H(+). It participates in carbohydrate degradation; glycolysis; pyruvate from D-glyceraldehyde 3-phosphate: step 1/5. The protein is Glyceraldehyde-3-phosphate dehydrogenase (GPD) of Phanerodontia chrysosporium (White-rot fungus).